The primary structure comprises 422 residues: Dioxygenase str8 (422 aa).

Residues C73, C75, C78, and H119 each contribute to the Zn(2+) site. H243, D245, and H382 together coordinate Fe cation.

This sequence belongs to the gamma-BBH/TMLD family. The cofactor is Fe(2+).

Its pathway is mycotoxin biosynthesis. In terms of biological role, dioxygenase; part of the gene cluster that mediates the biosynthesis of strobilurin A, an antifungal polyketide that contains a key beta-methoxyacrylate toxophore that targets the complex III of the mitochondrial electron transport chain. Strobilurin biosynthesis begins with construction of benzoyl CoA by step-wise elimination of ammonia from phenylalanine by the phenylalanine ammonia-lyase str11, oxygenation by str8 and retro-Claisen reaction to form benzoic acid, which is activated to its CoA thiolester benzoyl CoA by the dedicated CoA ligase str10. Benzoyl CoA forms the starter unit for the highly reducing polyketide synthase stpks1 that produces the polyketide prestrobilutin A. The FAD-dependent oxygenase str9 then catalyzes the key oxidative rearrangement responsible for the creation of the beta-methoxyacrylate toxophore. Str9 performs epoxidation of the 2,3 olefin of prestrobilutin A, followed by Meinwald rearrangement to furnish the aldehyde intermediate. Rapid enolization of the aldehyde intermediate would give the beta-methoxyacrylate skeleton and methylations catalyzed by str2 and str3 complete the synthesis and lead to the production of strobilurin A. The short-chain dehydrogenase stl2 and the dehydrogenase str4 play a role in the shunt pathway leading to the production of bolineol. The cluster encodes no obvious halogenase gene that could be involved in production of strobilurin B, nor any obvious dimethylallyl-transferase that could be involved in the production of strobilurin G. It is possible that unknown proteins encoded in, or near, the cluster (such as str1 or stl1) may form new classes of halogenases or dimethylally-transferases, or that the responsible genes are located elsewhere on the genome. Similarly, proteins encoded by str5/str6 hydrolases appear to have no chemical role in the biosynthesis of strobilurin A. Finally, no obvious self-resistance gene is found within the cluster. The sequence is that of Dioxygenase str8 from Strobilurus tenacellus.